A 62-amino-acid chain; its full sequence is MSSNKIINWFRRLREDWNRIITVARKPDRNFFSLNLKVTLLVLAVVGVLAYIIQLALTLIGV.

A helical transmembrane segment spans residues 40 to 60 (LLVLAVVGVLAYIIQLALTLI).

Belongs to the SecE/SEC61-gamma family. In terms of assembly, component of the Sec protein translocase complex. Heterotrimer consisting of SecY (alpha), SecG (beta) and SecE (gamma) subunits. The heterotrimers can form oligomers, although 1 heterotrimer is thought to be able to translocate proteins. Interacts with the ribosome. May interact with SecDF, and other proteins may be involved.

It is found in the cell membrane. Its function is as follows. Essential subunit of the Sec protein translocation channel SecYEG. Clamps together the 2 halves of SecY. May contact the channel plug during translocation. In Saccharolobus solfataricus (strain ATCC 35092 / DSM 1617 / JCM 11322 / P2) (Sulfolobus solfataricus), this protein is Protein translocase subunit SecE.